Consider the following 297-residue polypeptide: ER membrane protein complex subunit 2 (297 aa).

A2 bears the N-acetylalanine mark. 3 TPR repeats span residues 87 to 120, 155 to 188, and 192 to 225; these read HRVKRLTGMRFEAMERYDDAIQLYDRILQEDPTN, QEAWHELAELYINEHDYAKAAFCLEELMMTNPYN, and CQQYAEVKYTQGGLENLELSRKYFAQALKLNNRN. Residue K255 is modified to N6-acetyllysine.

It belongs to the EMC2 family. As to quaternary structure, component of the ER membrane protein complex (EMC).

It is found in the endoplasmic reticulum membrane. Part of the endoplasmic reticulum membrane protein complex (EMC) that enables the energy-independent insertion into endoplasmic reticulum membranes of newly synthesized membrane proteins. Preferentially accommodates proteins with transmembrane domains that are weakly hydrophobic or contain destabilizing features such as charged and aromatic residues. Involved in the cotranslational insertion of multi-pass membrane proteins in which stop-transfer membrane-anchor sequences become ER membrane spanning helices. It is also required for the post-translational insertion of tail-anchored/TA proteins in endoplasmic reticulum membranes. By mediating the proper cotranslational insertion of N-terminal transmembrane domains in an N-exo topology, with translocated N-terminus in the lumen of the ER, controls the topology of multi-pass membrane proteins like the G protein-coupled receptors. By regulating the insertion of various proteins in membranes, it is indirectly involved in many cellular processes. The polypeptide is ER membrane protein complex subunit 2 (Bos taurus (Bovine)).